Reading from the N-terminus, the 67-residue chain is Ubiquinol-cytochrome c reductase complex assembly factor 6 (67 aa).

Topologically, residues 1–8 are mitochondrial matrix; sequence MPGGVPWS. The helical; Signal-anchor for type II membrane protein transmembrane segment at 9 to 25 threads the bilayer; the sequence is AYLKMLSSSLLAMCAGA. The Mitochondrial intermembrane segment spans residues 26–67; that stretch reads QVVHWYYRPDLTIPEIPPKPGELKTELLGLKERRHEPHVSQQ.

It belongs to the UQCC6 family. As to quaternary structure, interacts with UQCRC1. Interacts with UQCRQ. Interacts with UQCC5. Forms a complex, named COMB/coordinator of mitochondrial CYTB biogenesis, composed of UQCC1, UQCC2, UQCC4, UQCC5 and UQCC6; stabilizes nascent cytochrome b/MT-CYB and promotes its membrane insertion. Forms a complex, named COMA, composed of UQCC1, UQCC2 and UQCC4; activates MT-CYB translation. Forms a complex, named COMC, composed of UQCC1, UQCC2; UQCC3 and UQCC4; mediates MT-CYB hemylation and association with the first nuclear-encoded complex III subunit UQCRQ. Interacts with MT-CYB. Highly expressed in brown adipose, cardiac and skeletal muscle (at protein level).

Its subcellular location is the mitochondrion inner membrane. In terms of biological role, required for the assembly and stability of the mitochondrial ubiquinol-cytochrome c reductase complex (complex III or cytochrome b-c1 complex), a multisubunit transmembrane complex that is part of the mitochondrial electron transport chain (ETC) which drives oxidative phosphorylation. Mediates early complex III biogenesis. Participates in regulating the levels of electron transport chain proteins, and therefore energy supply, in response to changes in energy demand. Also required for cytochrome c oxidase complex (complex IV) assembly. This is Ubiquinol-cytochrome c reductase complex assembly factor 6 from Mus musculus (Mouse).